Here is a 115-residue protein sequence, read N- to C-terminus: U3-lycotoxin-Ls1k (115 aa).

The signal sequence occupies residues 1-20 (MKFVLLFGVLLVALFSYSSA). The propeptide occupies 21–44 (EMLDDFGQADEDELLSLIEKEEAR). Cystine bridges form between Cys48–Cys63, Cys55–Cys72, Cys62–Cys87, and Cys74–Cys85.

Belongs to the neurotoxin 19 (CSTX) family. 01 subfamily. As to expression, expressed by the venom gland.

The protein localises to the secreted. This is U3-lycotoxin-Ls1k from Lycosa singoriensis (Wolf spider).